Reading from the N-terminus, the 377-residue chain is Aspartate aminotransferase (377 aa).

L-aspartate contacts are provided by Gly37, Trp123, and Asn173. N6-(pyridoxal phosphate)lysine is present on Lys234. An L-aspartate-binding site is contributed by Arg353.

Belongs to the class-I pyridoxal-phosphate-dependent aminotransferase family. Homodimer. Requires pyridoxal 5'-phosphate as cofactor.

It localises to the cytoplasm. The catalysed reaction is L-aspartate + 2-oxoglutarate = oxaloacetate + L-glutamate. This is Aspartate aminotransferase (aspC) from Thermotoga maritima (strain ATCC 43589 / DSM 3109 / JCM 10099 / NBRC 100826 / MSB8).